The chain runs to 220 residues: Translation initiation factor IF-3 (220 aa).

The tract at residues 182–220 (TPLVKKDDKEEPATRAVRTITAPPRPTSARLASKPAGNG) is disordered. A compositionally biased stretch (basic and acidic residues) spans 185–194 (VKKDDKEEPA).

This sequence belongs to the IF-3 family. As to quaternary structure, monomer.

The protein localises to the cytoplasm. In terms of biological role, IF-3 binds to the 30S ribosomal subunit and shifts the equilibrium between 70S ribosomes and their 50S and 30S subunits in favor of the free subunits, thus enhancing the availability of 30S subunits on which protein synthesis initiation begins. This is Translation initiation factor IF-3 from Synechococcus sp. (strain WH7803).